The primary structure comprises 133 residues: Nickel-responsive regulator (133 aa).

His-76, His-87, His-89, and Cys-95 together coordinate Ni(2+).

Belongs to the transcriptional regulatory CopG/NikR family. In terms of assembly, homotetramer. Requires Ni(2+) as cofactor.

Its function is as follows. Transcriptional repressor of the nikABCDE operon. Is active in the presence of excessive concentrations of intracellular nickel. This is Nickel-responsive regulator from Escherichia coli O6:K15:H31 (strain 536 / UPEC).